A 191-amino-acid chain; its full sequence is Fe/S biogenesis protein NfuA (191 aa).

Positions 149 and 152 each coordinate [4Fe-4S] cluster.

Belongs to the NfuA family. As to quaternary structure, homodimer. The cofactor is [4Fe-4S] cluster.

In terms of biological role, involved in iron-sulfur cluster biogenesis. Binds a 4Fe-4S cluster, can transfer this cluster to apoproteins, and thereby intervenes in the maturation of Fe/S proteins. Could also act as a scaffold/chaperone for damaged Fe/S proteins. This chain is Fe/S biogenesis protein NfuA, found in Escherichia coli O7:K1 (strain IAI39 / ExPEC).